Consider the following 306-residue polypeptide: Pantothenate kinase (306 aa).

91–98 (GSVAVGKS) provides a ligand contact to ATP.

This sequence belongs to the prokaryotic pantothenate kinase family.

Its subcellular location is the cytoplasm. It carries out the reaction (R)-pantothenate + ATP = (R)-4'-phosphopantothenate + ADP + H(+). Its pathway is cofactor biosynthesis; coenzyme A biosynthesis; CoA from (R)-pantothenate: step 1/5. This is Pantothenate kinase from Streptococcus suis (strain 05ZYH33).